We begin with the raw amino-acid sequence, 476 residues long: Glycogen synthase (476 aa).

Lys15 contributes to the ADP-alpha-D-glucose binding site.

The protein belongs to the glycosyltransferase 1 family. Bacterial/plant glycogen synthase subfamily.

It carries out the reaction [(1-&gt;4)-alpha-D-glucosyl](n) + ADP-alpha-D-glucose = [(1-&gt;4)-alpha-D-glucosyl](n+1) + ADP + H(+). The protein operates within glycan biosynthesis; glycogen biosynthesis. Its function is as follows. Synthesizes alpha-1,4-glucan chains using ADP-glucose. In Streptococcus gordonii (strain Challis / ATCC 35105 / BCRC 15272 / CH1 / DL1 / V288), this protein is Glycogen synthase.